The chain runs to 474 residues: Protein U79/U80 (474 aa).

Composition is skewed to basic and acidic residues over residues 156-165 (DRKKHDDEHR) and 175-219 (RKVE…KRQK). Disordered regions lie at residues 156-219 (DRKK…KRQK) and 412-441 (SGQNRGRARGRGRGRAPRRRNSNINNSRTQ). The segment covering 417–432 (GRARGRGRGRAPRRRN) has biased composition (basic residues).

Belongs to the herpesviridae U79/UL112 family.

It is found in the host nucleus. May be involved in DNA replication. The polypeptide is Protein U79/U80 (U79/U80) (Homo sapiens (Human)).